We begin with the raw amino-acid sequence, 532 residues long: uncharacterized protein (532 aa).

13 helical membrane passes run 13–33 (MSLL…QTLL), 53–73 (WLTT…AFLI), 80–100 (SLFL…GIAP), 111–131 (IQAV…LLIF), 142–162 (IFGL…GWII), 169–189 (IMFY…FFIF), 203–223 (LGAI…SEAG), 231–251 (IVLS…VQQL), 273–293 (VINI…PIYL), 306–326 (LLLL…GILF), 334–354 (LAII…QLTI), 361–381 (IMLI…PVMT), and 483–503 (INDA…LSIF).

It belongs to the major facilitator superfamily. EmrB family.

Its subcellular location is the cell membrane. This is an uncharacterized protein from Bacillus subtilis (strain 168).